The chain runs to 221 residues: Immunoregulatory peptides (221 aa).

A signal peptide spans 1–19; the sequence is MNYLCLVVTLVAVAGAISG. Positions 20 to 45 are excised as a propeptide; that stretch reads EKFSDDNTGYQSTPSLRIRTTPGRRR. Residues 21–155 are disordered; sequence KFSDDNTGYQ…PRTIGPPYTR (135 aa). Residues 25-34 are compositionally biased toward polar residues; the sequence is DNTGYQSTPS. Low complexity predominate over residues 48–69; it reads PRTIGPPYTRRTLRTTTDYSTT. Polar residues-rich tracts occupy residues 70–85 and 123–133; these read VENGNLTTPAANSTEK and NGTTPAANSTE. The propeptide occupies 191–221; sequence EISWTFGPLYTWRTTKGYGTTLETTNATSTS.

As to expression, salivary glands.

It localises to the secreted. Suppress host inflammatory response. Exerts significant anti-inflammatory functions, either by directly inhibiting host secretion of inflammatory factors such as tumor necrosis factor-alpha (TNF), monocyte chemotactic protein-1 (CCL2), and interferon-gamma (IFNG) or by indirectly increasing the secretion of immunosuppressant cytokine of interleukin-10 (IL10). Also potently scavenges free radical in vitro in a rapid manner. All tested concentrations of this peptide have little effect on the cell viability. In vivo, inhibits hind paw adjuvant-induced inflammation in mouse in a dose-dependent manner. Its function is as follows. Suppress host inflammatory response. Exerts significant anti-inflammatory functions, either by directly inhibiting host secretion of inflammatory factors such as tumor necrosis factor-alpha (TNF), monocyte chemotactic protein-1 (CCL2), and interferon-gamma (IFNG) or by indirectly increasing the secretion of immunosuppressant cytokine of interleukin-10 (IL10). Also potently scavenges free radical in vitro in a rapid manner. Low concentrations of this peptide have little effect on the cell viability, whereas high concentrations increase the cell viability by 10-20%. In vivo, inhibits hind paw adjuvant-induced inflammation in mouse in a dose-dependent manner. Functionally, not studied but probably similar to Hyalomin-B1. In Hyalomma asiaticum asiaticum (Tick), this protein is Immunoregulatory peptides.